The sequence spans 403 residues: Argininosuccinate synthase (403 aa).

ATP is bound by residues 13–21 (AYSGGLDTS) and Ala-40. The L-citrulline site is built by Tyr-92 and Ser-97. Residue Gly-122 coordinates ATP. Residues Thr-124, Asn-128, and Asp-129 each contribute to the L-aspartate site. Position 128 (Asn-128) interacts with L-citrulline. Residues Arg-132, Ser-181, Ser-190, Glu-266, and Tyr-278 each contribute to the L-citrulline site.

This sequence belongs to the argininosuccinate synthase family. Type 1 subfamily. Homotetramer.

It localises to the cytoplasm. The catalysed reaction is L-citrulline + L-aspartate + ATP = 2-(N(omega)-L-arginino)succinate + AMP + diphosphate + H(+). Its pathway is amino-acid biosynthesis; L-arginine biosynthesis; L-arginine from L-ornithine and carbamoyl phosphate: step 2/3. This chain is Argininosuccinate synthase, found in Aliivibrio fischeri (strain ATCC 700601 / ES114) (Vibrio fischeri).